The sequence spans 87 residues: DNA-directed RNA polymerase subunit omega (87 aa).

Belongs to the RNA polymerase subunit omega family. The RNAP catalytic core consists of 2 alpha, 1 beta, 1 beta' and 1 omega subunit. When a sigma factor is associated with the core the holoenzyme is formed, which can initiate transcription.

It catalyses the reaction RNA(n) + a ribonucleoside 5'-triphosphate = RNA(n+1) + diphosphate. Promotes RNA polymerase assembly. Latches the N- and C-terminal regions of the beta' subunit thereby facilitating its interaction with the beta and alpha subunits. The sequence is that of DNA-directed RNA polymerase subunit omega from Alcanivorax borkumensis (strain ATCC 700651 / DSM 11573 / NCIMB 13689 / SK2).